The primary structure comprises 415 residues: Squalene synthase 3 (415 aa).

Transmembrane regions (helical) follow at residues A281–Y301 and L392–P412.

The protein belongs to the phytoene/squalene synthase family. The cofactor is Mg(2+). Mn(2+) is required as a cofactor.

The protein resides in the endoplasmic reticulum membrane. The enzyme catalyses 2 (2E,6E)-farnesyl diphosphate + NADH + H(+) = squalene + 2 diphosphate + NAD(+). The catalysed reaction is 2 (2E,6E)-farnesyl diphosphate + NADPH + H(+) = squalene + 2 diphosphate + NADP(+). It functions in the pathway terpene metabolism; lanosterol biosynthesis; lanosterol from farnesyl diphosphate: step 1/3. Its function is as follows. Component of the triterpene saponins (e.g. ginsenosides or panaxosides) and phytosterols biosynthetic pathways. Catalyzes the biosynthesis of squalene. The sequence is that of Squalene synthase 3 from Panax ginseng (Korean ginseng).